Reading from the N-terminus, the 107-residue chain is Small ribosomal subunit protein bS6 (107 aa).

It belongs to the bacterial ribosomal protein bS6 family.

Its function is as follows. Binds together with bS18 to 16S ribosomal RNA. The chain is Small ribosomal subunit protein bS6 from Synechococcus elongatus (strain ATCC 33912 / PCC 7942 / FACHB-805) (Anacystis nidulans R2).